Reading from the N-terminus, the 358-residue chain is Probable tartrate dehydrogenase/decarboxylase TtuC' (358 aa).

3 residues coordinate Mn(2+): D222, D246, and D250.

This sequence belongs to the isocitrate and isopropylmalate dehydrogenases family. Mg(2+) is required as a cofactor. It depends on Mn(2+) as a cofactor. Requires K(+) as cofactor.

It localises to the cytoplasm. It catalyses the reaction tartrate + NAD(+) = 2-hydroxy-3-oxosuccinate + NADH + H(+). The catalysed reaction is (2R,3S)-tartrate + NAD(+) = 2-hydroxy-3-oxosuccinate + NADH + H(+). The enzyme catalyses (2R,3R)-tartrate + NAD(+) = 2-hydroxy-3-oxosuccinate + NADH + H(+). It carries out the reaction (2R,3R)-tartrate + H(+) = (R)-glycerate + CO2. It catalyses the reaction (R)-malate + NAD(+) = pyruvate + CO2 + NADH. Its pathway is carbohydrate acid metabolism; tartrate degradation; 2-hydroxy-3-oxosuccinate from L-tartrate: step 1/1. It participates in carbohydrate acid metabolism; tartrate degradation; 2-hydroxy-3-oxosuccinate from meso-tartrate: step 1/1. It functions in the pathway carbohydrate acid metabolism; tartrate degradation; D-glycerate from L-tartrate: step 1/1. Its function is as follows. Has multiple catalytic activities. Apart from catalyzing the oxidation of (+)-tartrate to oxaloglycolate, also converts meso-tartrate to D-glycerate and catalyzes the oxidative decarboxylation of D-malate to pyruvate. The chain is Probable tartrate dehydrogenase/decarboxylase TtuC' (ttuC') from Agrobacterium vitis (Rhizobium vitis).